We begin with the raw amino-acid sequence, 943 residues long: MSNTTVEQFAAELKRPVEDLLKQLKEAGVSKNSGSDSLTLDDKQLLNAYLTKKNGSNGGTISIRRTKTEVSTVDGVKVETRKRGRTVNIPSAEELAAQVKAAQTQAAPVQPEQTAEDAVKARAEAAARAEARAKAEAEAAKLKAAKAGNKAKPAAQKPTEAKAETAPVAAETKPAEPKEKAVKPKHERNGKGKDAKKPAKPAAPAVPQPVVSAEEQAQRDEEARRAAALRAHQEALLKEKQERQARREAMKQQAEQQAKAAQEAKTGRQRPAKPAEKPQAAAPAVENKPVNPAKAKKEDRRNRDDEGQGRNAKGKGAKGGRDRNNARNGGDERVRGGKKGKKLKLEPNQHAFQAPTEPVVHEVLVPETITVADLAHKMAVKGVEVVKALMKMGMMVTINQSIDQDTALIVVEELGHIGKPAAADDPEAFLGEGAEAVEAEALPRPPVVTVMGHVDHGKTSLLDYIRRAKVVQGEAGGITQHIGAYHVKTPRGVITFLDTPGHEAFTAMRARGAKATDIVILVVAADDGVMPQTIEAIAHAKAAGVPIVVAVNKIDKDTANPERIRQELTQHEVIPDDWGGTVQFIDVSAKKGTNIDALLEAVLLEAEVLELTAPVDAPAKGIIVEARLDKGRGAVATLLVQNGTLKKGDMLLAGTAFGKIRAMVDENGKSITEAGPSIPVEILGLSDVPNAGEDAMVLADEKKAREIALFRQGKYRDVRLAKQQAAKLENMFNNMGETQAQSLSVIIKADVQGSYEALAGSLKKLSADEVKVNVLHSGVGGITESDVNLAIASGAFIIGFNVRADASSRKLAENENVEIRYYNIIYDAIDDVKAAMSGMLSPEKKEQVTGTVEIRQVISVSKVGNIAGCMVTDGVVKRDSHIRLIRNNVVIHTGELASLKRYKDDVKEVRMGFECGLMLKGYNEIMEGDQLECFDIVEVARTL.

The span at 99–113 (VKAAQTQAAPVQPEQ) shows a compositional bias: low complexity. The interval 99–354 (VKAAQTQAAP…LEPNQHAFQA (256 aa)) is disordered. The segment covering 117 to 141 (DAVKARAEAAARAEARAKAEAEAAK) has biased composition (basic and acidic residues). The segment covering 145–172 (AKAGNKAKPAAQKPTEAKAETAPVAAET) has biased composition (low complexity). The span at 173-197 (KPAEPKEKAVKPKHERNGKGKDAKK) shows a compositional bias: basic and acidic residues. The segment covering 200–215 (KPAAPAVPQPVVSAEE) has biased composition (low complexity). Basic and acidic residues predominate over residues 216 to 250 (QAQRDEEARRAAALRAHQEALLKEKQERQARREAM). Residues 251–264 (KQQAEQQAKAAQEA) show a composition bias toward low complexity. Composition is skewed to basic and acidic residues over residues 295–308 (AKKE…DEGQ) and 319–335 (GGRD…ERVR). The 170-residue stretch at 443-612 (PRPPVVTVMG…LLEAEVLELT (170 aa)) folds into the tr-type G domain. The tract at residues 452–459 (GHVDHGKT) is G1. A GTP-binding site is contributed by 452-459 (GHVDHGKT). The segment at 477–481 (GITQH) is G2. Residues 498-501 (DTPG) are G3. Residues 498 to 502 (DTPGH) and 552 to 555 (NKID) contribute to the GTP site. Positions 552–555 (NKID) are G4. The interval 588–590 (SAK) is G5.

Belongs to the TRAFAC class translation factor GTPase superfamily. Classic translation factor GTPase family. IF-2 subfamily.

It is found in the cytoplasm. In terms of biological role, one of the essential components for the initiation of protein synthesis. Protects formylmethionyl-tRNA from spontaneous hydrolysis and promotes its binding to the 30S ribosomal subunits. Also involved in the hydrolysis of GTP during the formation of the 70S ribosomal complex. In Neisseria gonorrhoeae (strain NCCP11945), this protein is Translation initiation factor IF-2.